A 1427-amino-acid chain; its full sequence is MTSTKEIKQLQKAKSKAQSSNNLKEEASLCNQLGEVYAKTGDYQAAIEEHRQELALSEILHDVIGSAVANRKIGECYAELGNIEAALKHQRLHLNLARSVHDAAEEQRALATIGRTYLFLFDSDQSANSLKHAEDAFKRSLAIVDERLEGTVSPREISEMKARLLLNLGCVYDGMKEPQRCSDLIRQSIYIAEKNNLLEDLYRANFNLGSIHFRNGQHSRAMRCFEQSKECARKMKDKFSESECFHSIGKILLHLGDFSAARRSLKKAFCLGSQQPSDREAVKKDFRHAIRGCQLEQTAAEVTQKFSHEALDLSEQLGDLYCKVGCYSKALEAYQTQLACAEALAKPARELAVIHVSLAATYTDLRQHHRAVEHYRQELQLRKGNPKEECETWLNMAVCQEEMCQSMETLDHCFTSALNCAEKSGLNKLQRRVLRVWLQAQRRCGSSQCDDTEARLMELCERDGLSLDQSEDEDEEDEVDNSEPLEDSDIQYSESDDEDLEGYDKMVTGRRKTQRWNRRNEKGETVLHRACIEGNLKQVQYLIEQGHPVNVRDYCGWTPLHESCNYGHQEIVAFLLDRGANVNDPGGRECGGITPLHDTLSCGHFSVARLLVLRGASVTVRNSKGHTPLDTLRQWFKTYSGQLDPETKQECLETEKLIKRALSGDVSVVCAAPRQQKELQDSQLFDAEYSEPLLRESPPSPPPITRPAATVPTSKDSAPKHRSTSASTRRPRGMEVDVLYGDDSSSSDNPDSDCSLSPLRPVRSRPRSPPAQSPQEVPSSQELPSVYGIKETTVPPQSESGRLEYQKAMQNLGSAKSRLFSQSLSDPAFTSTPAVSANSRAALVPEDQYLADDWLEDDLIDMQPKKKRRVSEHNATRETTSRSQNNSSTIAEVPPRVQSCSSRGSLSLKKGSNKPRQVKMNQLPGMVMLGRREVSRSQSPIMTQESDHIQEPAPPSHQAMPPASFQNRAAHVPAPIRMRVKVQDNVFLIPVPHSEADSCTVAWLCDQAAQRYYQMCGLLPRLSLQKEGALLLPTDPLLAVLHTNEEVLAEVCSWDLPPLPERYRKACESLGVEENRRVSRVCEVQDSSSCVSVCGLSLSPASLNPLLRALKLQASLTELRISANRLNDELLPEMMAAAATMPRLRVLDISANQITGEGLRKASDAFETRSQAAFPCLEELNLSMNPLGDGWTQALASLLSSCPLLSSLSLQACGLSARFLQQHRLLLANAMASTGNMRSVCLSHNALGSTGFELVLKTLPMHCLTHLELSAVCRGPSDQPSMEILTKLLAQGDCPLTHLNLSGNGLTDHSVLLLARCLPVCPSLVSLDLSANPLVTSTGLHSLLNGLVEARRPLGHLNLQGCQVSGPLAEDCLDSLSDHIRDLRLCSQSLNKLDQDALQQSWKRRTEAVHIFSRNSKCMLSISSPSH.

The disordered stretch occupies residues 1–21 (MTSTKEIKQLQKAKSKAQSSN). The span at 10–21 (LQKAKSKAQSSN) shows a compositional bias: low complexity. TPR repeat units lie at residues 27–60 (ASLCNQLGEVYAKTGDYQAAIEEHRQELALSEIL), 67–100 (AVANRKIGECYAELGNIEAALKHQRLHLNLARSV), 107–147 (QRAL…VDER), 162–195 (ARLLLNLGCVYDGMKEPQRCSDLIRQSIYIAEKN), 202–235 (YRANFNLGSIHFRNGQHSRAMRCFEQSKECARKM), 242–275 (SECFHSIGKILLHLGDFSAARRSLKKAFCLGSQQ), 311–344 (LDLSEQLGDLYCKVGCYSKALEAYQTQLACAEAL), and 352–385 (AVIHVSLAATYTDLRQHHRAVEHYRQELQLRKGN). The disordered stretch occupies residues 465 to 502 (LSLDQSEDEDEEDEVDNSEPLEDSDIQYSESDDEDLEG). Over residues 469–501 (QSEDEDEEDEVDNSEPLEDSDIQYSESDDEDLE) the composition is skewed to acidic residues. ANK repeat units lie at residues 522 to 551 (KGETVLHRACIEGNLKQVQYLIEQGHPVNV), 555 to 584 (CGWTPLHESCNYGHQEIVAFLLDRGANVND), and 591 to 620 (GGITPLHDTLSCGHFSVARLLVLRGASVTV). 3 disordered regions span residues 692 to 801 (PLLR…SESG), 865 to 922 (KKKR…KMNQ), and 941 to 961 (IMTQESDHIQEPAPPSHQAMP). Residues 742-761 (DDSSSSDNPDSDCSLSPLRP) are compositionally biased toward low complexity. The segment covering 773 to 783 (SPQEVPSSQEL) has biased composition (polar residues). Residues 871-880 (SEHNATRETT) are compositionally biased toward basic and acidic residues. A compositionally biased stretch (polar residues) spans 881–890 (SRSQNNSSTI). Low complexity predominate over residues 899–910 (SCSSRGSLSLKK). LRR repeat units lie at residues 1113–1137 (QASLTELRISANRLNDELLPEMMAA), 1141–1168 (MPRLRVLDISANQITGEGLRKASDAFET), 1174–1197 (FPCLEELNLSMNPLGDGWTQALAS), 1234–1258 (TGNMRSVCLSHNALGSTGFELVLKT), 1293–1316 (DCPLTHLNLSGNGLTDHSVLLLAR), 1321–1346 (CPSLVSLDLSANPLVTSTGLHSLLNG), and 1377–1400 (SDHIRDLRLCSQSLNKLDQDALQQ).

This sequence belongs to the Tonsoku family. In terms of assembly, component of the MMS22L-TONSL complex. Binds histones, with a strong preference for histone H3.1 (histones H3.1 and H3-4/H3.1t).

It localises to the nucleus. The protein resides in the chromosome. It is found in the cytoplasm. Functionally, component of the MMS22L-TONSL complex, a complex that promotes homologous recombination-mediated repair of double-strand breaks (DSBs) at stalled or collapsed replication forks. The MMS22L-TONSL complex is required to maintain genome integrity during DNA replication. It mediates the assembly of RAD51 filaments on single-stranded DNA (ssDNA): the MMS22L-TONSL complex is recruited to DSBs following histone replacement by histone chaperones and eviction of the replication protein A complex (RPA/RP-A) from DSBs. Following recruitment to DSBs, the TONSL-MMS22L complex promotes recruitment of RAD51 filaments and subsequent homologous recombination. Within the complex, TONSL acts as a histone reader, which recognizes and binds newly synthesized histones following their replacement by histone chaperones. This is Tonsoku-like protein (tonsl) from Danio rerio (Zebrafish).